Reading from the N-terminus, the 204-residue chain is Tumor protein D53 (204 aa).

The disordered stretch occupies residues 1 to 31; that stretch reads MEAQAQGLLETEPLQGRDGDAVGSADFSSML. Residues 22 to 73 adopt a coiled-coil conformation; that stretch reads VGSADFSSMLSEEEKEELKAELIQLEDEITTLRQVLSAKERHLVEIKQKLGM. Ser-29, Ser-86, Ser-122, and Ser-131 each carry phosphoserine. At Arg-133 the chain carries Omega-N-methylarginine. Thr-146 is subject to Phosphothreonine. Ser-149 and Ser-174 each carry phosphoserine. Residues 164-204 form a disordered region; it reads KVGGTNHGGGSFEEVLNSTAHASSQNASAGSRQTKDEELQC. Polar residues predominate over residues 179–195; the sequence is LNSTAHASSQNASAGSR.

Belongs to the TPD52 family. Forms a homodimer or heterodimer with other members of the family.

The chain is Tumor protein D53 (Tpd52l1) from Mus musculus (Mouse).